Here is a 147-residue protein sequence, read N- to C-terminus: Myoglobin (147 aa).

In terms of domain architecture, Globin spans 2-141; that stretch reads ADFDAVLKCW…VIADLEANYK (140 aa). His-60 is a nitrite binding site. His-60 contacts O2. His-89 is a binding site for heme b.

Belongs to the globin family. As to quaternary structure, monomeric.

It is found in the cytoplasm. The protein localises to the sarcoplasm. The enzyme catalyses Fe(III)-heme b-[protein] + nitric oxide + H2O = Fe(II)-heme b-[protein] + nitrite + 2 H(+). The catalysed reaction is H2O2 + AH2 = A + 2 H2O. In terms of biological role, monomeric heme protein which primary function is to store oxygen and facilitate its diffusion within muscle tissues. Reversibly binds oxygen through a pentacoordinated heme iron and enables its timely and efficient release as needed during periods of heightened demand. Depending on the oxidative conditions of tissues and cells, and in addition to its ability to bind oxygen, it also has a nitrite reductase activity whereby it regulates the production of bioactive nitric oxide. Under stress conditions, like hypoxia and anoxia, it also protects cells against reactive oxygen species thanks to its pseudoperoxidase activity. This Auxis rochei (Bullet tuna) protein is Myoglobin (mb).